The chain runs to 106 residues: 3-phenylpropionate/cinnamic acid dioxygenase ferredoxin subunit (106 aa).

A Rieske domain is found at 4-99 (IYACPVADVP…VHVEGGDIFI (96 aa)). The [2Fe-2S] cluster site is built by Cys42, His44, Cys62, and His65.

Belongs to the bacterial ring-hydroxylating dioxygenase ferredoxin component family. This dioxygenase system consists of four proteins: the two subunits of the hydroxylase component (HcaE and HcaF), a ferredoxin (HcaC) and a ferredoxin reductase (HcaD). The cofactor is [2Fe-2S] cluster.

It participates in aromatic compound metabolism; 3-phenylpropanoate degradation. Functionally, part of the multicomponent 3-phenylpropionate dioxygenase, that converts 3-phenylpropionic acid (PP) and cinnamic acid (CI) into 3-phenylpropionate-dihydrodiol (PP-dihydrodiol) and cinnamic acid-dihydrodiol (CI-dihydrodiol), respectively. This protein seems to be a 2Fe-2S ferredoxin. In Shigella flexneri serotype 5b (strain 8401), this protein is 3-phenylpropionate/cinnamic acid dioxygenase ferredoxin subunit.